The chain runs to 160 residues: Cytochrome b6-f complex subunit 4 (160 aa).

Helical transmembrane passes span 36–56 (LLYV…GLAI), 95–115 (LLGV…PFIE), and 131–151 (TVFL…TMPI).

It belongs to the cytochrome b family. PetD subfamily. As to quaternary structure, the 4 large subunits of the cytochrome b6-f complex are cytochrome b6, subunit IV (17 kDa polypeptide, petD), cytochrome f and the Rieske protein, while the 4 small subunits are petG, petL, petM and petN. The complex functions as a dimer.

The protein localises to the plastid. It is found in the chloroplast thylakoid membrane. Its function is as follows. Component of the cytochrome b6-f complex, which mediates electron transfer between photosystem II (PSII) and photosystem I (PSI), cyclic electron flow around PSI, and state transitions. The chain is Cytochrome b6-f complex subunit 4 from Pyropia yezoensis (Susabi-nori).